Here is a 386-residue protein sequence, read N- to C-terminus: Alkanesulfonate monooxygenase (386 aa).

It belongs to the SsuD family.

The enzyme catalyses an alkanesulfonate + FMNH2 + O2 = an aldehyde + FMN + sulfite + H2O + 2 H(+). Its function is as follows. Catalyzes the desulfonation of aliphatic sulfonates. This Paraburkholderia phytofirmans (strain DSM 17436 / LMG 22146 / PsJN) (Burkholderia phytofirmans) protein is Alkanesulfonate monooxygenase.